Consider the following 778-residue polypeptide: Serine/threonine-protein kinase BRSK1 (778 aa).

A compositionally biased stretch (gly residues) spans 1 to 12; sequence MSSGSKEGGGGS. Residues 1–29 are disordered; sequence MSSGSKEGGGGSPAYHLPHPHPHPPQHAQ. One can recognise a Protein kinase domain in the interval 34–285; sequence YRLEKTLGKG…LEQIQKHPWY (252 aa). ATP-binding positions include 40–48 and Lys-63; that span reads LGKGQTGLV. The active-site Proton acceptor is the Asp-156. A Phosphothreonine; by LKB1 modification is found at Thr-189. One can recognise a UBA domain in the interval 314-356; sequence ELDPDVLESMASLGCFRDRERLHRELRSEEENQEKMIYYLLLD. Positions 362–383 are enriched in basic and acidic residues; that stretch reads PSCEDQDLPPRNDVDPPRKRVD. Positions 362–548 are disordered; that stretch reads PSCEDQDLPP…SPGGGVGGAA (187 aa). Phosphoserine is present on residues Ser-399, Ser-443, Ser-447, and Ser-450. Low complexity predominate over residues 430-457; sequence SRSVSGASTGLSSSPLSSPRSPVFSFSP. Omega-N-methylarginine occurs at positions 466, 481, 484, and 498. Pro residues predominate over residues 491–508; the sequence is QPPPPSARSTPLPGPPGS. At Ser-508 the chain carries Phosphoserine. The segment covering 509-533 has biased composition (low complexity); sequence PRSSGGTPLHSPLHTPRASPTGTPG. Arg-525 carries the post-translational modification Omega-N-methylarginine. Residues Thr-529 and Thr-535 each carry the phosphothreonine modification. Position 550 is an omega-N-methylarginine (Arg-550). The disordered stretch occupies residues 560–588; it reads FLGSPRFHRRKMQVPTAEEMSSLTPESSP. Thr-583 carries the post-translational modification Phosphothreonine. Ser-586, Ser-587, and Ser-601 each carry phosphoserine. Residues 719 to 778 are disordered; that stretch reads QPSVQALADEKNGAQTRPAGTPPRSLQPPPGRSDPDLSSSPRRGPPKDKKLLATNGTPLP.

This sequence belongs to the protein kinase superfamily. CAMK Ser/Thr protein kinase family. SNF1 subfamily. Mg(2+) serves as cofactor. In terms of processing, phosphorylated at Thr-189 by STK11/LKB1 in complex with STE20-related adapter-alpha (STRADA) pseudo kinase and CAB39. Not phosphorylated at Thr-189 by CaMKK2. In contrast, it is phosphorylated and activated by CaMKK1. May be inactivated via dephosphorylation of Thr-189 by PP2C. As to expression, present in the gray matter of the brain and spinal cord (at protein level). Expressed in the nervous system, distributed within the brain and spinal cord of embryonic and postnatal animals.

The protein resides in the cytoplasm. It is found in the nucleus. The protein localises to the cytoskeleton. Its subcellular location is the microtubule organizing center. It localises to the centrosome. The protein resides in the synapse. It is found in the presynaptic active zone. The protein localises to the cytoplasmic vesicle. Its subcellular location is the secretory vesicle. It localises to the synaptic vesicle. It carries out the reaction L-seryl-[protein] + ATP = O-phospho-L-seryl-[protein] + ADP + H(+). It catalyses the reaction L-threonyl-[protein] + ATP = O-phospho-L-threonyl-[protein] + ADP + H(+). The catalysed reaction is L-seryl-[tau protein] + ATP = O-phospho-L-seryl-[tau protein] + ADP + H(+). The enzyme catalyses L-threonyl-[tau protein] + ATP = O-phospho-L-threonyl-[tau protein] + ADP + H(+). Its activity is regulated as follows. Activated by phosphorylation on Thr-189 by STK11/LKB1. Serine/threonine-protein kinase that plays a key role in polarization of neurons and centrosome duplication. Phosphorylates CDC25B, CDC25C, MAPT/TAU, RIMS1, TUBG1, TUBG2 and WEE1. Following phosphorylation and activation by STK11/LKB1, acts as a key regulator of polarization of cortical neurons, probably by mediating phosphorylation of microtubule-associated proteins such as MAPT/TAU at 'Thr-504' and 'Ser-554'. Also regulates neuron polarization by mediating phosphorylation of WEE1 at 'Ser-642' in postmitotic neurons, leading to down-regulate WEE1 activity in polarized neurons. In neurons, localizes to synaptic vesicles and plays a role in neurotransmitter release, possibly by phosphorylating RIMS1. Also acts as a positive regulator of centrosome duplication by mediating phosphorylation of gamma-tubulin (TUBG1 and TUBG2) at 'Ser-131', leading to translocation of gamma-tubulin and its associated proteins to the centrosome. Involved in the UV-induced DNA damage checkpoint response, probably by inhibiting CDK1 activity through phosphorylation and activation of WEE1, and inhibition of CDC25B and CDC25C. This chain is Serine/threonine-protein kinase BRSK1 (Brsk1), found in Mus musculus (Mouse).